The primary structure comprises 425 residues: Putative E3 ubiquitin-protein ligase UBR7 (425 aa).

The segment at 44-116 adopts a UBR-type zinc-finger fold; it reads EKCSYSQGSV…KNLECKLLPD (73 aa). Residues 132–188 form a PHD-type; atypical zinc finger; that stretch reads GLYCICKRPYPDPEDEIPDEMIQCVVCEDWFHGRHLGAIPPESGDFQEMVCQACMKR. Glycyl lysine isopeptide (Lys-Gly) (interchain with G-Cter in SUMO2) cross-links involve residues Lys225 and Lys252. A disordered region spans residues 225–246; the sequence is KPENGEHQDSTLKEDVPEQGKD. Ser264 is modified (phosphoserine). Lys274 participates in a covalent cross-link: Glycyl lysine isopeptide (Lys-Gly) (interchain with G-Cter in SUMO2). Ser354 is subject to Phosphoserine. Residue Lys398 forms a Glycyl lysine isopeptide (Lys-Gly) (interchain with G-Cter in SUMO2) linkage.

In terms of tissue distribution, expressed in sperm (at protein level).

The catalysed reaction is S-ubiquitinyl-[E2 ubiquitin-conjugating enzyme]-L-cysteine + [acceptor protein]-L-lysine = [E2 ubiquitin-conjugating enzyme]-L-cysteine + N(6)-ubiquitinyl-[acceptor protein]-L-lysine.. The protein operates within protein modification; protein ubiquitination. E3 ubiquitin-protein ligase which is a component of the N-end rule pathway. Recognizes and binds to proteins bearing specific N-terminal residues that are destabilizing according to the N-end rule, leading to their ubiquitination and subsequent degradation. The polypeptide is Putative E3 ubiquitin-protein ligase UBR7 (UBR7) (Homo sapiens (Human)).